Consider the following 173-residue polypeptide: Lipoprotein signal peptidase (173 aa).

A run of 4 helical transmembrane segments spans residues 24–44, 55–75, 80–100, and 105–125; these read PWLG…IAIL, ITGF…SFLA, WQRW…VWLL, and GQKL…GNVI. Residues D135 and D153 contribute to the active site. Residues 145–165 form a helical membrane-spanning segment; the sequence is HWPAFNVADCGICIGAVLLII.

Belongs to the peptidase A8 family.

Its subcellular location is the cell inner membrane. It catalyses the reaction Release of signal peptides from bacterial membrane prolipoproteins. Hydrolyzes -Xaa-Yaa-Zaa-|-(S,diacylglyceryl)Cys-, in which Xaa is hydrophobic (preferably Leu), and Yaa (Ala or Ser) and Zaa (Gly or Ala) have small, neutral side chains.. Its pathway is protein modification; lipoprotein biosynthesis (signal peptide cleavage). This protein specifically catalyzes the removal of signal peptides from prolipoproteins. The polypeptide is Lipoprotein signal peptidase (Ralstonia nicotianae (strain ATCC BAA-1114 / GMI1000) (Ralstonia solanacearum)).